A 145-amino-acid polypeptide reads, in one-letter code: Thioredoxin C-3 (145 aa).

Heme contacts are provided by Cys-25, Cys-28, and His-29. A Thioredoxin domain is found at 29–140; the sequence is HQALLPLEPI…LQQWLDQQLQ (112 aa). Cys-65 and Cys-68 are oxidised to a cystine.

The protein belongs to the thioredoxin family.

Participates in various redox reactions through the reversible oxidation of its active center dithiol to a disulfide and catalyzes dithiol-disulfide exchange reactions. The chain is Thioredoxin C-3 from Corynebacterium nephridii.